Consider the following 119-residue polypeptide: Large ribosomal subunit protein uL18 (119 aa).

Residues 54–76 (LTSASTLADDVEGETPTEESRSV) are disordered.

The protein belongs to the universal ribosomal protein uL18 family. Part of the 50S ribosomal subunit; part of the 5S rRNA/L5/L18/L25 subcomplex. Contacts the 5S and 23S rRNAs.

In terms of biological role, this is one of the proteins that bind and probably mediate the attachment of the 5S RNA into the large ribosomal subunit, where it forms part of the central protuberance. In Salinibacter ruber (strain DSM 13855 / M31), this protein is Large ribosomal subunit protein uL18.